The following is a 268-amino-acid chain: Tryptophan synthase alpha chain (268 aa).

Residues glutamate 49 and aspartate 60 each act as proton acceptor in the active site.

It belongs to the TrpA family. Tetramer of two alpha and two beta chains.

It catalyses the reaction (1S,2R)-1-C-(indol-3-yl)glycerol 3-phosphate + L-serine = D-glyceraldehyde 3-phosphate + L-tryptophan + H2O. It functions in the pathway amino-acid biosynthesis; L-tryptophan biosynthesis; L-tryptophan from chorismate: step 5/5. Functionally, the alpha subunit is responsible for the aldol cleavage of indoleglycerol phosphate to indole and glyceraldehyde 3-phosphate. This is Tryptophan synthase alpha chain from Escherichia coli O139:H28 (strain E24377A / ETEC).